The following is a 404-amino-acid chain: NADH-quinone oxidoreductase subunit D 2 (404 aa).

It belongs to the complex I 49 kDa subunit family. NDH-1 is composed of 14 different subunits. Subunits NuoB, C, D, E, F, and G constitute the peripheral sector of the complex.

Its subcellular location is the cell inner membrane. The catalysed reaction is a quinone + NADH + 5 H(+)(in) = a quinol + NAD(+) + 4 H(+)(out). Its function is as follows. NDH-1 shuttles electrons from NADH, via FMN and iron-sulfur (Fe-S) centers, to quinones in the respiratory chain. The immediate electron acceptor for the enzyme in this species is believed to be ubiquinone. Couples the redox reaction to proton translocation (for every two electrons transferred, four hydrogen ions are translocated across the cytoplasmic membrane), and thus conserves the redox energy in a proton gradient. The sequence is that of NADH-quinone oxidoreductase subunit D 2 from Sinorhizobium medicae (strain WSM419) (Ensifer medicae).